Here is a 138-residue protein sequence, read N- to C-terminus: Sporulation-specific cell division protein SsgB (138 aa).

The protein belongs to the SsgA family. In terms of assembly, monomer. Interacts with SsgA. Interacts with FtsZ (via N-terminus).

The protein localises to the cell septum. Its function is as follows. Involved in sporulation-specific cell division. Required for early stages of sporulation. Important in the process of growth cessation prior to sporulation-specific cell division. Recruits cell division protein FtsZ to the future septum sites and tethers the contractile ring structure (Z ring) to the cytoplasmic membrane during sporulation. Stimulates polymerization and filament length of FtsZ in vitro. The chain is Sporulation-specific cell division protein SsgB from Thermobifida fusca (strain YX).